The chain runs to 210 residues: MNIFTKKPNPREVLRESKREMTQATRGIEKEIGSLQSEEKKLVLEIKRTAKSGNEGATKILARQLIRLRQQIANLQGSRAQMRGIATHTQAMHAHTSVAAGMQGATKAMAAMSKNMDPAKQAKVMREFQKQSAQMDMTTEMMSDSIDDALDNDEAEDETEDLTNQVLDEIGIDIASQLSSAPKGKIGGKKAEDVGSSGIDELEKRLAALR.

The interval 1-23 (MNIFTKKPNPREVLRESKREMTQ) is disordered. The segment covering 9 to 23 (NPREVLRESKREMTQ) has biased composition (basic and acidic residues). A coiled-coil region spans residues 28-84 (IEKEIGSLQSEEKKLVLEIKRTAKSGNEGATKILARQLIRLRQQIANLQGSRAQMRG). The interval 178 to 200 (LSSAPKGKIGGKKAEDVGSSGID) is disordered.

The protein belongs to the SNF7 family. In terms of assembly, component of the endosomal sorting required for transport complex III (ESCRT-III), composed at least of VPS2, VPS20, VPS24 and VPS32.

Its subcellular location is the endosome. Component of the ESCRT-III complex, which is required for multivesicular bodies (MVBs) formation and sorting of endosomal cargo proteins into MVBs. The ESCRT-III complex is probably involved in the concentration of MVB cargo. The sequence is that of Vacuolar protein sorting-associated protein 2 homolog 3 (VPS2.3) from Arabidopsis thaliana (Mouse-ear cress).